The primary structure comprises 241 residues: Adapter protein MecA (241 aa).

The segment at 77–102 (KNTDEDDVADESQGDASVDSEHPDQV) is disordered. Over residues 80–89 (DEDDVADESQ) the composition is skewed to acidic residues.

Belongs to the MecA family. In terms of assembly, homodimer.

Functionally, enables the recognition and targeting of unfolded and aggregated proteins to the ClpC protease or to other proteins involved in proteolysis. This is Adapter protein MecA from Levilactobacillus brevis (strain ATCC 367 / BCRC 12310 / CIP 105137 / JCM 1170 / LMG 11437 / NCIMB 947 / NCTC 947) (Lactobacillus brevis).